The following is a 304-amino-acid chain: GTP cyclohydrolase FolE2 (304 aa).

It belongs to the GTP cyclohydrolase IV family.

The enzyme catalyses GTP + H2O = 7,8-dihydroneopterin 3'-triphosphate + formate + H(+). Its pathway is cofactor biosynthesis; 7,8-dihydroneopterin triphosphate biosynthesis; 7,8-dihydroneopterin triphosphate from GTP: step 1/1. Functionally, converts GTP to 7,8-dihydroneopterin triphosphate. The polypeptide is GTP cyclohydrolase FolE2 (Chromohalobacter salexigens (strain ATCC BAA-138 / DSM 3043 / CIP 106854 / NCIMB 13768 / 1H11)).